The following is a 31-amino-acid chain: Cyclotide cter-R (31 aa).

The cyclopeptide (Gly-Asn) cross-link spans 1–31; sequence GIPCGESCVFIPCTVTALLGCSCKDKVCYKN. Disulfide bonds link C4-C21, C8-C23, and C13-C28.

Post-translationally, this is a cyclic peptide.

The protein localises to the secreted. Probably participates in a plant defense mechanism. This chain is Cyclotide cter-R, found in Clitoria ternatea (Butterfly pea).